We begin with the raw amino-acid sequence, 329 residues long: Delta(7)-sterol 5(6)-desaturase erg32 (329 aa).

2 consecutive transmembrane segments (helical) span residues 67-87 (LFLI…SFAY) and 149-169 (FYLF…IYWI). In terms of domain architecture, Fatty acid hydroxylase spans 156–281 (ALFLLFSDFL…FFTLFDRLCS (126 aa)). The short motif at 170–175 (HRALHH) is the Histidine box-1 element. Residues 183-187 (HKLHH) carry the Histidine box-2 motif. Residues 210-230 (LPYHMFPFFFPLNKYVYLLLF) traverse the membrane as a helical segment. The short motif at 257–262 (HHAAHH) is the Histidine box-3 element.

This sequence belongs to the sterol desaturase family. Fe cation serves as cofactor.

The protein resides in the endoplasmic reticulum membrane. It localises to the golgi apparatus membrane. It catalyses the reaction episterol + 2 Fe(II)-[cytochrome b5] + O2 + 2 H(+) = 5-dehydroepisterol + 2 Fe(III)-[cytochrome b5] + 2 H2O. It participates in steroid metabolism; ergosterol biosynthesis. Its function is as follows. C-5 sterol desaturase; part of the third module of ergosterol biosynthesis pathway that includes by the late steps of the pathway. Erg31 and erg32 catalyze the introduction of a C-5 double bond in the B ring to produce 5-dehydroepisterol. The third module or late pathway involves the ergosterol synthesis itself through consecutive reactions that mainly occur in the endoplasmic reticulum (ER) membrane. Firstly, the squalene synthase erg9 catalyzes the condensation of 2 farnesyl pyrophosphate moieties to form squalene, which is the precursor of all steroids. Secondly, squalene is converted into lanosterol by the consecutive action of the squalene epoxidase erg1 and the lanosterol synthase erg7. The lanosterol 14-alpha-demethylase erg11/cyp1 catalyzes C14-demethylation of lanosterol to produce 4,4'-dimethyl cholesta-8,14,24-triene-3-beta-ol. In the next steps, a complex process involving various demethylation, reduction and desaturation reactions catalyzed by the C-14 reductase erg24 and the C-4 demethylation complex erg25-erg26-erg27 leads to the production of zymosterol. Erg28 likely functions in the C-4 demethylation complex reaction by tethering erg26 and Erg27 to the endoplasmic reticulum or to facilitate interaction between these proteins. Then, the sterol 24-C-methyltransferase erg6 catalyzes the methyl transfer from S-adenosyl-methionine to the C-24 of zymosterol to form fecosterol. The C-8 sterol isomerase erg2 catalyzes the reaction which results in unsaturation at C-7 in the B ring of sterols and thus converts fecosterol to episterol. The sterol-C5-desaturases erg31 and erg32 then catalyze the introduction of a C-5 double bond in the B ring to produce 5-dehydroepisterol. The C-22 sterol desaturase erg5 further converts 5-dehydroepisterol into ergosta-5,7,22,24(28)-tetraen-3beta-ol by forming the C-22(23) double bond in the sterol side chain. Finally, ergosta-5,7,22,24(28)-tetraen-3beta-ol is substrate of the C-24(28) sterol reductase erg4 to produce ergosterol. In the genus Schizosaccharomyces, a second route exists between lanosterol and fecosterol, via the methylation of lanosterol to eburicol by erg6, followed by C14-demethylation by erg11/cyp1 and C4-demethylation by the demethylation complex erg25-erg26-erg27. In Schizosaccharomyces pombe (strain 972 / ATCC 24843) (Fission yeast), this protein is Delta(7)-sterol 5(6)-desaturase erg32.